A 455-amino-acid chain; its full sequence is MTFNKRQVKINHWPEKNDKEKQKYSKNRETVKLTLLTLLLLCSICFLFLTLNFPFTIEFTASIPRTCDHNFTVYVYDLPKEFNIGLLQNCRHLNIYTNMCPHVANNGLGQPLHRGRTSWFSTHQFIAEMIFHARVENHPCRTYEPDTADIFYVPFYGGLYASSVFREQNLTKRDELAVRLVNYISGQRWWKRSNGRDHFLAIGRTAWDFMRSSDTDFGANMLMQMPRVMNMSVLTVERQPWNGDNHFGIPYPSYFHPYTSAEMVTWQDKMKNVERPNLFSFVGGPRKGLEKAAIRDELIKQCAESSHCELLKCENGGSRCHNPMTVLGVMARSRFCLQAPGDSFTRRSTFDAMLAGCIPVFFSPHTMYTQYMWYLPDDKRSYSVFMDEKNNTHIEQELLRISENEVVQMREIVIDLIPRLTYAHPNSTNYDLPDAVDIALEALAKQARDNVVVSL.

Topologically, residues 1–34 (MTFNKRQVKINHWPEKNDKEKQKYSKNRETVKLT) are cytoplasmic. Residues 35 to 55 (LLTLLLLCSICFLFLTLNFPF) form a helical; Signal-anchor for type II membrane protein membrane-spanning segment. The Lumenal portion of the chain corresponds to 56-455 (TIEFTASIPR…QARDNVVVSL (400 aa)). Residues Asn70, Asn169, Asn230, Asn390, and Asn426 are each glycosylated (N-linked (GlcNAc...) asparagine).

This sequence belongs to the glycosyltransferase 47 family. Expressed in roots and hypocotyls.

It is found in the golgi apparatus membrane. In terms of biological role, functions in xyloglucan synthesis by adding side chains to the xylosylated glucan backbone. Involved in the galactosylation of hemicellulose xyloglucan. The polypeptide is Probable xyloglucan galactosyltransferase GT17 (Arabidopsis thaliana (Mouse-ear cress)).